Here is a 502-residue protein sequence, read N- to C-terminus: Lysine--tRNA ligase (502 aa).

2 residues coordinate Mg(2+): Glu413 and Glu420.

This sequence belongs to the class-II aminoacyl-tRNA synthetase family. Homodimer. Requires Mg(2+) as cofactor.

It is found in the cytoplasm. It catalyses the reaction tRNA(Lys) + L-lysine + ATP = L-lysyl-tRNA(Lys) + AMP + diphosphate. The sequence is that of Lysine--tRNA ligase (lysS) from Haemophilus influenzae (strain ATCC 51907 / DSM 11121 / KW20 / Rd).